A 281-amino-acid polypeptide reads, in one-letter code: Sulfur carrier protein FdhD (281 aa).

The active-site Cysteine persulfide intermediate is the Cys117.

It belongs to the FdhD family.

It is found in the cytoplasm. In terms of biological role, required for formate dehydrogenase (FDH) activity. Acts as a sulfur carrier protein that transfers sulfur from IscS to the molybdenum cofactor prior to its insertion into FDH. This chain is Sulfur carrier protein FdhD, found in Xanthomonas axonopodis pv. citri (strain 306).